A 255-amino-acid chain; its full sequence is 3-alpha-(or 20-beta)-hydroxysteroid dehydrogenase (255 aa).

Residue 10 to 34 (IITGGARGLGAEAARQAVAAGARVV) participates in NAD(+) binding. A substrate-binding site is contributed by Ser-139. Tyr-152 acts as the Proton acceptor in catalysis.

The protein belongs to the short-chain dehydrogenases/reductases (SDR) family. Homotetramer.

The catalysed reaction is androstan-3alpha,17beta-diol + NAD(+) = 17beta-hydroxyandrostanone + NADH + H(+). The protein operates within lipid metabolism; C21-steroid hormone metabolism. The protein is 3-alpha-(or 20-beta)-hydroxysteroid dehydrogenase of Streptomyces exfoliatus (Streptomyces hydrogenans).